We begin with the raw amino-acid sequence, 113 residues long: UPF0212 protein MmarC6_1165 (113 aa).

Belongs to the UPF0212 family.

The polypeptide is UPF0212 protein MmarC6_1165 (Methanococcus maripaludis (strain C6 / ATCC BAA-1332)).